Here is a 292-residue protein sequence, read N- to C-terminus: tRNA pseudouridine synthase B (292 aa).

The Nucleophile role is filled by aspartate 38.

Belongs to the pseudouridine synthase TruB family. Type 1 subfamily.

It catalyses the reaction uridine(55) in tRNA = pseudouridine(55) in tRNA. Its function is as follows. Responsible for synthesis of pseudouridine from uracil-55 in the psi GC loop of transfer RNAs. The protein is tRNA pseudouridine synthase B of Streptococcus gordonii (strain Challis / ATCC 35105 / BCRC 15272 / CH1 / DL1 / V288).